Here is a 341-residue protein sequence, read N- to C-terminus: Glycerol-3-phosphate dehydrogenase [NAD(P)+] (341 aa).

Residues Ser-14, Phe-15, Arg-35, and Lys-108 each coordinate NADPH. Sn-glycerol 3-phosphate contacts are provided by Lys-108 and Gly-136. Ala-140 contacts NADPH. Positions 191, 244, 254, 255, and 256 each coordinate sn-glycerol 3-phosphate. Lys-191 serves as the catalytic Proton acceptor. Position 255 (Arg-255) interacts with NADPH. 2 residues coordinate NADPH: Val-279 and Glu-281.

It belongs to the NAD-dependent glycerol-3-phosphate dehydrogenase family.

Its subcellular location is the cytoplasm. It carries out the reaction sn-glycerol 3-phosphate + NAD(+) = dihydroxyacetone phosphate + NADH + H(+). It catalyses the reaction sn-glycerol 3-phosphate + NADP(+) = dihydroxyacetone phosphate + NADPH + H(+). The protein operates within membrane lipid metabolism; glycerophospholipid metabolism. Functionally, catalyzes the reduction of the glycolytic intermediate dihydroxyacetone phosphate (DHAP) to sn-glycerol 3-phosphate (G3P), the key precursor for phospholipid synthesis. This chain is Glycerol-3-phosphate dehydrogenase [NAD(P)+], found in Pseudomonas syringae pv. tomato (strain ATCC BAA-871 / DC3000).